We begin with the raw amino-acid sequence, 570 residues long: MSEKHPGPLVVEGKLTDAERMKLESNYLRGTIAEDLNDGLTGGFKGDNFLLIRFHGMYQQDDRDIRAERAEQKLEPRHAMLLRCRLPGGVITTKQWQAIDKFAGENTIYGSIRLTNRQTFQFHGILKKNVKPVHQMLHSVGLDALATANDMNRNVLCTSNPYESQLHAEAYEWAKKISEHLLPRTRAYAEIWLDQEKVATTDEEPILGQTYLPRKFKTTVVIPPQNDIDLHANDMNFVAIAENGKLVGFNLLVGGGLSIEHGNKKTYARTASEFGYLPLEHTLAVAEAVVTTQRDWGNRTDRKNAKTKYTLERVGVETFKAEVERRAGIKFEPSRPYEFTGRGDRIGWVKGIDDNWHLTLFIENGRILDYPGRPLKTGLLEIAKIHKGDFRITANQNLIIAGVPESEKAKIEKIAKESGLMNAVTPQRENSMACVSFPTCPLAMAEAERFLPSFIDNIDNLMVKHGVSDEHIVMRVTGCPNGCGRAMLAEVGLVGKAPGRYNLHLGGNRIGTRIPRMYKENITEPEILASLDELIGRWAKEREAGEGFGDFTVRAGIIRPVLDPARDLWD.

Positions 434, 440, 479, and 483 each coordinate [4Fe-4S] cluster. Residue cysteine 483 coordinates siroheme.

This sequence belongs to the nitrite and sulfite reductase 4Fe-4S domain family. In terms of assembly, alpha(8)-beta(8). The alpha component is a flavoprotein, the beta component is a hemoprotein. Requires siroheme as cofactor. The cofactor is [4Fe-4S] cluster.

The catalysed reaction is hydrogen sulfide + 3 NADP(+) + 3 H2O = sulfite + 3 NADPH + 4 H(+). The protein operates within sulfur metabolism; hydrogen sulfide biosynthesis; hydrogen sulfide from sulfite (NADPH route): step 1/1. Its function is as follows. Component of the sulfite reductase complex that catalyzes the 6-electron reduction of sulfite to sulfide. This is one of several activities required for the biosynthesis of L-cysteine from sulfate. The chain is Sulfite reductase [NADPH] hemoprotein beta-component from Shigella flexneri serotype 5b (strain 8401).